A 154-amino-acid chain; its full sequence is Vimentin (154 aa).

A compositionally biased stretch (low complexity) spans 1–13; that stretch reads MSTRSVSSSSYRR. A disordered region spans residues 1–31; sequence MSTRSVSSSSYRRMFGGPGTASRPSSTRSYV. The residue at position 2 (Ser2) is an N-acetylserine. Positions 2–95 are head; the sequence is STRSVSSSSY…FSLADAINTE (94 aa). Phosphoserine is present on Ser5. Phosphoserine; by PKA and PKC; alternate is present on Ser7. Ser7 carries O-linked (GlcNAc) serine; alternate glycosylation. The residue at position 8 (Ser8) is a Phosphoserine. Ser9 and Ser10 each carry phosphoserine; by PKC. Thr20 is subject to Phosphothreonine. Residue Ser25 is modified to Phosphoserine; by PKA and PKC. Ser26 is subject to Phosphoserine; by PKC. Thr33 is a glycosylation site (O-linked (GlcNAc) threonine). Ser34 is a glycosylation site (O-linked (GlcNAc) serine; alternate). Ser34 carries the phosphoserine; by PKC; alternate modification. Ser39 is subject to Phosphoserine; by CaMK2, PKA, PKC and ROCK2. Phosphoserine; by PKC is present on Ser42. The residue at position 49 (Ser49) is a Phosphoserine. Position 53 is a phosphotyrosine (Tyr53). Ser55 carries the phosphoserine modification. At Ser56 the chain carries Phosphoserine; by CDK5 and CDK1. Tyr61 is modified (phosphotyrosine). Ser66 bears the Phosphoserine; by PKA and PKC mark. Ser72 carries the post-translational modification Phosphoserine; by AURKB and ROCK2. Phosphoserine; by CaMK2 is present on Ser83. The residue at position 87 (Ser87) is a Phosphoserine. The coil 1A stretch occupies residues 96-131; it reads FKNTRTNEKVELQELNDRFANYIDKVRFLEQQNKIL. A coiled-coil region spans residues 96 to 131; the sequence is FKNTRTNEKVELQELNDRFANYIDKVRFLEQQNKIL. Residues 103–154 form the IF rod domain; sequence EKVELQELNDRFANYIDKVRFLEQQNKILLAELEQLKGQGKSRLGHLYEEEM. Residue Lys104 forms a Glycyl lysine isopeptide (Lys-Gly) (interchain with G-Cter in SUMO2) linkage. Tyr117 carries the post-translational modification Phosphotyrosine. N6-acetyllysine; alternate occurs at positions 120, 129, and 139. An N6-succinyllysine; alternate mark is found at Lys120 and Lys129. Residues Lys120, Lys129, and Lys139 each participate in a glycyl lysine isopeptide (Lys-Gly) (interchain with G-Cter in SUMO2); alternate cross-link. The linker 1 stretch occupies residues 132 to 153; sequence LAELEQLKGQGKSRLGHLYEEE. Ser144 is modified (phosphoserine). A region of interest (coil 1B) is located at residue Met154.

Belongs to the intermediate filament family. As to quaternary structure, homomer assembled from elementary dimers. Identified in complexes that contain VIM, EZR, AHNAK, BFSP1, BFSP2, ANK2, PLEC, PRX and spectrin. Interacts with BCAS3. Interacts with LGSN. Interacts with SYNM. Interacts (via rod region) with PLEC (via CH 1 domain). Interacts with STK33. Interacts with LARP6. Interacts with RAB8B. Interacts with TOR1A; the interaction associates TOR1A with the cytoskeleton. Interacts with TOR1AIP1. Interacts with TOR1AIP1. Interacts with DIAPH1. Interacts with EPPK1; interaction is dependent of higher-order structure of intermediate filament. Interacts with the non-receptor tyrosine kinase SRMS; the interaction leads to phosphorylation of VIM. Interacts with NOD2. Interacts (via head region) with CORO1C. Interacts with HDGF. Interacts with PRKCE (via phorbol-ester/DAG-type 2 domain). Interacts with BFSP2. Interacts with PPL. Interacts with PKP1 and PKP2. Interacts with SCRIB (via PDZ domains); the interaction protects SCRIB from proteasomal degradation and facilitates SCRIB localization to intermediate filaments, the interaction is reduced by cell contact inhibition. In terms of processing, one of the most prominent phosphoproteins in various cells of mesenchymal origin. Phosphorylation is enhanced during cell division, at which time vimentin filaments are significantly reorganized. Phosphorylation by PKN1 inhibits the formation of filaments. Filament disassembly during mitosis is promoted by phosphorylation at Ser-55 as well as by nestin. Phosphorylated at Ser-56 by CDK5 during neutrophil secretion in the cytoplasm. Phosphorylated by STK33. Phosphorylated on tyrosine residues by SRMS.

Its subcellular location is the cytoplasm. The protein resides in the cytoskeleton. The protein localises to the nucleus matrix. It is found in the cell membrane. Functionally, vimentins are class-III intermediate filaments found in various non-epithelial cells, especially mesenchymal cells. Vimentin is attached to the nucleus, endoplasmic reticulum, and mitochondria, either laterally or terminally. Plays a role in cell directional movement, orientation, cell sheet organization and Golgi complex polarization at the cell migration front. Protects SCRIB from proteasomal degradation and facilitates its localization to intermediate filaments in a cell contact-mediated manner. In terms of biological role, involved with LARP6 in the stabilization of type I collagen mRNAs for CO1A1 and CO1A2. This Ovis aries (Sheep) protein is Vimentin (VIM).